A 151-amino-acid chain; its full sequence is SsrA-binding protein (151 aa).

This sequence belongs to the SmpB family.

It localises to the cytoplasm. In terms of biological role, required for rescue of stalled ribosomes mediated by trans-translation. Binds to transfer-messenger RNA (tmRNA), required for stable association of tmRNA with ribosomes. tmRNA and SmpB together mimic tRNA shape, replacing the anticodon stem-loop with SmpB. tmRNA is encoded by the ssrA gene; the 2 termini fold to resemble tRNA(Ala) and it encodes a 'tag peptide', a short internal open reading frame. During trans-translation Ala-aminoacylated tmRNA acts like a tRNA, entering the A-site of stalled ribosomes, displacing the stalled mRNA. The ribosome then switches to translate the ORF on the tmRNA; the nascent peptide is terminated with the 'tag peptide' encoded by the tmRNA and targeted for degradation. The ribosome is freed to recommence translation, which seems to be the essential function of trans-translation. In Chlamydia trachomatis serovar A (strain ATCC VR-571B / DSM 19440 / HAR-13), this protein is SsrA-binding protein.